A 112-amino-acid chain; its full sequence is CLAVATA3/ESR (CLE)-related protein 44 (112 aa).

The N-terminal stretch at 1 to 39 is a signal peptide; the sequence is MATTIDQTSIKSLHFHQVIRLIITIIFLAFLFLIGPTSS. The tract at residues 41-112 is disordered; it reads NHHLHESSSK…VPSGPNPISN (72 aa). The span at 62–71 shows a compositional bias: polar residues; it reads QPSTPSSSTM. Residues Pro-104 and Pro-107 each carry the hydroxyproline modification. Residue Pro-107 is glycosylated (O-linked (Ara...) hydroxyproline).

Belongs to the CLV3/ESR signal peptide family. Interacts specifically with the leucine-rich repeat receptor-like protein kinase TDR, especially in the presence of SERK2. Post-translationally, the O-glycosylation (arabinosylation) of the hydroxyproline Pro-107 enhances binding affinity of the CLE44p peptide for its receptor. In terms of tissue distribution, mostly expressed in flowers and leaves. Widely expressed along the vascular strands. In roots and hypocotyls, present in endodermal cells as well as cells in the phloem and the adjacent pericycle.

It is found in the secreted. The protein resides in the extracellular space. Functionally, extracellular signal peptide that regulates cell fate. May act with TDR as a ligand-receptor pair in a signal transduction pathway that represses tracheary element differentiation but promotes the formation of procambial cells adjacent to phloem cells in the veins. Regulates the transition of protophloem cells from proliferation to differentiation, thus impinging on postembryonic growth capacity of the root meristem; this signaling pathway requires CRN and CLV2. In Arabidopsis thaliana (Mouse-ear cress), this protein is CLAVATA3/ESR (CLE)-related protein 44.